The following is a 345-amino-acid chain: Phosphoribosylformylglycinamidine cyclo-ligase (345 aa).

This sequence belongs to the AIR synthase family.

The protein resides in the cytoplasm. It catalyses the reaction 2-formamido-N(1)-(5-O-phospho-beta-D-ribosyl)acetamidine + ATP = 5-amino-1-(5-phospho-beta-D-ribosyl)imidazole + ADP + phosphate + H(+). It functions in the pathway purine metabolism; IMP biosynthesis via de novo pathway; 5-amino-1-(5-phospho-D-ribosyl)imidazole from N(2)-formyl-N(1)-(5-phospho-D-ribosyl)glycinamide: step 2/2. The chain is Phosphoribosylformylglycinamidine cyclo-ligase from Shewanella baltica (strain OS185).